The primary structure comprises 498 residues: ATP synthase subunit beta, chloroplastic (498 aa).

Residue 172–179 (GGAGVGKT) coordinates ATP.

The protein belongs to the ATPase alpha/beta chains family. In terms of assembly, F-type ATPases have 2 components, CF(1) - the catalytic core - and CF(0) - the membrane proton channel. CF(1) has five subunits: alpha(3), beta(3), gamma(1), delta(1), epsilon(1). CF(0) has four main subunits: a(1), b(1), b'(1) and c(9-12).

The protein resides in the plastid. It is found in the chloroplast thylakoid membrane. It carries out the reaction ATP + H2O + 4 H(+)(in) = ADP + phosphate + 5 H(+)(out). Functionally, produces ATP from ADP in the presence of a proton gradient across the membrane. The catalytic sites are hosted primarily by the beta subunits. The sequence is that of ATP synthase subunit beta, chloroplastic from Nicotiana sylvestris (Wood tobacco).